A 419-amino-acid chain; its full sequence is Light-independent protochlorophyllide reductase subunit N (419 aa).

[4Fe-4S] cluster-binding residues include C20, C45, and C102.

It belongs to the BchN/ChlN family. As to quaternary structure, protochlorophyllide reductase is composed of three subunits; BchL, BchN and BchB. Forms a heterotetramer of two BchB and two BchN subunits. [4Fe-4S] cluster is required as a cofactor.

It catalyses the reaction chlorophyllide a + oxidized 2[4Fe-4S]-[ferredoxin] + 2 ADP + 2 phosphate = protochlorophyllide a + reduced 2[4Fe-4S]-[ferredoxin] + 2 ATP + 2 H2O. Its pathway is porphyrin-containing compound metabolism; bacteriochlorophyll biosynthesis (light-independent). Functionally, component of the dark-operative protochlorophyllide reductase (DPOR) that uses Mg-ATP and reduced ferredoxin to reduce ring D of protochlorophyllide (Pchlide) to form chlorophyllide a (Chlide). This reaction is light-independent. The NB-protein (BchN-BchB) is the catalytic component of the complex. This is Light-independent protochlorophyllide reductase subunit N from Chlorobaculum tepidum (strain ATCC 49652 / DSM 12025 / NBRC 103806 / TLS) (Chlorobium tepidum).